The primary structure comprises 1071 residues: ATP-dependent helicase/deoxyribonuclease subunit B (1071 aa).

The protein belongs to the helicase family. AddB/RexB type 2 subfamily. Heterodimer of AddA and RexB. Mg(2+) is required as a cofactor.

In terms of biological role, the heterodimer acts as both an ATP-dependent DNA helicase and an ATP-dependent, dual-direction single-stranded exonuclease. Recognizes the chi site generating a DNA molecule suitable for the initiation of homologous recombination. This subunit has 5' -&gt; 3' nuclease activity but not helicase activity. The sequence is that of ATP-dependent helicase/deoxyribonuclease subunit B from Streptococcus pyogenes serotype M3 (strain ATCC BAA-595 / MGAS315).